We begin with the raw amino-acid sequence, 252 residues long: Chitooligosaccharide deacetylase (252 aa).

Mg(2+) contacts are provided by His-61 and His-125.

This sequence belongs to the YdjC deacetylase family. ChbG subfamily. As to quaternary structure, homodimer. Requires Mg(2+) as cofactor.

It is found in the cytoplasm. The catalysed reaction is N,N'-diacetylchitobiose + H2O = N-acetyl-beta-D-glucosaminyl-(1-&gt;4)-D-glucosamine + acetate. It carries out the reaction diacetylchitobiose-6'-phosphate + H2O = N'-monoacetylchitobiose-6'-phosphate + acetate. The protein operates within glycan degradation; chitin degradation. Its function is as follows. Involved in the degradation of chitin. ChbG is essential for growth on the acetylated chitooligosaccharides chitobiose and chitotriose but is dispensable for growth on cellobiose and chitosan dimer, the deacetylated form of chitobiose. Deacetylation of chitobiose-6-P and chitotriose-6-P is necessary for both the activation of the chb promoter by the regulatory protein ChbR and the hydrolysis of phosphorylated beta-glucosides by the phospho-beta-glucosidase ChbF. Catalyzes the removal of only one acetyl group from chitobiose-6-P to yield monoacetylchitobiose-6-P, the inducer of ChbR and the substrate of ChbF. The chain is Chitooligosaccharide deacetylase from Escherichia coli (strain 55989 / EAEC).